We begin with the raw amino-acid sequence, 480 residues long: Cysteine--tRNA ligase (480 aa).

C29 lines the Zn(2+) pocket. A 'HIGH' region motif is present at residues P31–H41. 3 residues coordinate Zn(2+): C221, H246, and E250. A 'KMSKS' region motif is present at residues K278–S282. An ATP-binding site is contributed by K281.

Belongs to the class-I aminoacyl-tRNA synthetase family. In terms of assembly, monomer. It depends on Zn(2+) as a cofactor.

Its subcellular location is the cytoplasm. It catalyses the reaction tRNA(Cys) + L-cysteine + ATP = L-cysteinyl-tRNA(Cys) + AMP + diphosphate. The chain is Cysteine--tRNA ligase from Chlorobium chlorochromatii (strain CaD3).